Consider the following 422-residue polypeptide: Dihydroorotase (422 aa).

Zn(2+) contacts are provided by His59 and His61. Substrate contacts are provided by residues 61 to 63 (HFR) and Asn93. 3 residues coordinate Zn(2+): Asp150, His177, and His230. Asn276 is a binding site for substrate. Zn(2+) is bound at residue Asp303. Asp303 is a catalytic residue. His307 serves as a coordination point for substrate.

The protein belongs to the metallo-dependent hydrolases superfamily. DHOase family. Class I DHOase subfamily. Zn(2+) serves as cofactor.

The catalysed reaction is (S)-dihydroorotate + H2O = N-carbamoyl-L-aspartate + H(+). It participates in pyrimidine metabolism; UMP biosynthesis via de novo pathway; (S)-dihydroorotate from bicarbonate: step 3/3. Its function is as follows. Catalyzes the reversible cyclization of carbamoyl aspartate to dihydroorotate. The protein is Dihydroorotase of Streptococcus pyogenes serotype M1.